The primary structure comprises 247 residues: ATP synthase subunit a, chloroplastic (247 aa).

Helical transmembrane passes span 38 to 58 (QVLITSWVVIVILLGSAIVTV), 95 to 115 (VPFIGTLFLFIFVSNWSGALL), 134 to 154 (INTTVALALLTSIAYFYAGLS), 199 to 219 (LVVVVLVSLVPSVVPIPVMFL), and 220 to 240 (GLFTSGIQALIFATLAAAYIG).

It belongs to the ATPase A chain family. F-type ATPases have 2 components, CF(1) - the catalytic core - and CF(0) - the membrane proton channel. CF(1) has five subunits: alpha(3), beta(3), gamma(1), delta(1), epsilon(1). CF(0) has four main subunits: a, b, b' and c.

It is found in the plastid. It localises to the chloroplast thylakoid membrane. Its function is as follows. Key component of the proton channel; it plays a direct role in the translocation of protons across the membrane. The sequence is that of ATP synthase subunit a, chloroplastic from Populus alba (White poplar).